The sequence spans 672 residues: Synaptotagmin-like protein 4 (672 aa).

In terms of domain architecture, RabBD spans 4–122; the sequence is ILDLSFLSEM…KATGDWFYDQ (119 aa). An FYVE-type zinc finger spans residues 63 to 105; the sequence is CARCQEGLGRLISKSNTCVGCNHLVCRECRVLESNGSWRCKVC. The tract at residues 199-222 is disordered; it reads SESLDSYTADSDSTSRRDSLDKSG. A phosphoserine mark is found at Ser-201, Ser-204, Ser-217, Ser-221, and Ser-274. Residues 357–479 enclose the C2 1 domain; it reads VTGKIAFSLK…KLDKKLDHCL (123 aa). A Phosphoserine modification is found at Ser-489. Positions 508–634 constitute a C2 2 domain; the sequence is PASKLPVGGD…ISSGEVVDWM (127 aa).

In terms of assembly, part of a ternary complex containing STX1A and RAB27A. Can bind both dominant negative and dominant active mutants of RAB27A. Binds STXBP1, RAB3A, RAB8A and RAB27B. Interacts with MYO5A. As to expression, detected in insulin-secreting cell lines.

The protein resides in the membrane. It is found in the cytoplasmic vesicle. It localises to the secretory vesicle membrane. Modulates exocytosis of dense-core granules and secretion of hormones in the pancreas and the pituitary. Interacts with vesicles containing negatively charged phospholipids in a Ca(2+)-independent manner. This is Synaptotagmin-like protein 4 (Sytl4) from Rattus norvegicus (Rat).